The sequence spans 184 residues: MNMKNNNLVSSYARALFHVSGSRLGIIRKEVEFLLAFFKDQDVFVYLSHPMVSLLHKKEAILSIKENLSENLVKFIMVTLANKRSRLLILILEKFLNLVRESENELEITIKSAEILKKPDIKIITESLNFLGKIIKVSHVVDPSILGGFVVRYGFNVIDASLKSYLDRLVDLSKMEMLKIRNCI.

The protein belongs to the ATPase delta chain family. In terms of assembly, F-type ATPases have 2 components, F(1) - the catalytic core - and F(0) - the membrane proton channel. F(1) has five subunits: alpha(3), beta(3), gamma(1), delta(1), epsilon(1). F(0) has three main subunits: a(1), b(2) and c(10-14). The alpha and beta chains form an alternating ring which encloses part of the gamma chain. F(1) is attached to F(0) by a central stalk formed by the gamma and epsilon chains, while a peripheral stalk is formed by the delta and b chains.

The protein resides in the cell membrane. F(1)F(0) ATP synthase produces ATP from ADP in the presence of a proton or sodium gradient. F-type ATPases consist of two structural domains, F(1) containing the extramembraneous catalytic core and F(0) containing the membrane proton channel, linked together by a central stalk and a peripheral stalk. During catalysis, ATP synthesis in the catalytic domain of F(1) is coupled via a rotary mechanism of the central stalk subunits to proton translocation. Its function is as follows. This protein is part of the stalk that links CF(0) to CF(1). It either transmits conformational changes from CF(0) to CF(1) or is implicated in proton conduction. This chain is ATP synthase subunit delta, found in Wolbachia pipientis subsp. Culex pipiens (strain wPip).